A 78-amino-acid chain; its full sequence is uncharacterized protein (78 aa).

Residues 1-78 are disordered; sequence MSSNSNTDHS…VDLEGPKDEQ (78 aa). 2 stretches are compositionally biased toward basic and acidic residues: residues 10–33 and 63–78; these read STGD…ETES and LNLK…KDEQ.

This is an uncharacterized protein from Schizosaccharomyces pombe (strain 972 / ATCC 24843) (Fission yeast).